The chain runs to 364 residues: tRNA/tmRNA (uracil-C(5))-methyltransferase (364 aa).

5 residues coordinate S-adenosyl-L-methionine: Q188, Y216, N221, E237, and D297. C322 (nucleophile) is an active-site residue. Residue E356 is the Proton acceptor of the active site.

It belongs to the class I-like SAM-binding methyltransferase superfamily. RNA M5U methyltransferase family. TrmA subfamily.

The enzyme catalyses uridine(54) in tRNA + S-adenosyl-L-methionine = 5-methyluridine(54) in tRNA + S-adenosyl-L-homocysteine + H(+). It carries out the reaction uridine(341) in tmRNA + S-adenosyl-L-methionine = 5-methyluridine(341) in tmRNA + S-adenosyl-L-homocysteine + H(+). Its function is as follows. Dual-specificity methyltransferase that catalyzes the formation of 5-methyluridine at position 54 (m5U54) in all tRNAs, and that of position 341 (m5U341) in tmRNA (transfer-mRNA). The chain is tRNA/tmRNA (uracil-C(5))-methyltransferase from Colwellia psychrerythraea (strain 34H / ATCC BAA-681) (Vibrio psychroerythus).